We begin with the raw amino-acid sequence, 646 residues long: Zinc finger protein 503 (646 aa).

Positions 1–11 (MSTAPSLSALR) are enriched in polar residues. The interval 1-70 (MSTAPSLSAL…PPSDPLRQAN (70 aa)) is disordered. Residues 16–28 (SGGGGGGGGGGGA) show a composition bias toward gly residues. A compositionally biased stretch (low complexity) spans 34-52 (SALSGNSSGPGPGSSPAGS). Ser-102 bears the Phosphoserine mark. Positions 121–332 (SQIGKPDPSP…PSAPTSSSVL (212 aa)) are disordered. A compositionally biased stretch (low complexity) spans 130-139 (PSSKLSSVAS). 2 stretches are compositionally biased toward gly residues: residues 140–152 (NGGG…GGAA) and 189–205 (GGGG…GGGV). The residue at position 209 (Lys-209) is an N6-acetyllysine. Residues 217–226 (ATCQPFTPRT) are compositionally biased toward polar residues. A compositionally biased stretch (low complexity) spans 227–240 (GSPSSSASACSPGG). Residues Ser-231 and Ser-237 each carry the phosphoserine modification. Basic and acidic residues predominate over residues 250–259 (EGKDDKKDTD). 2 stretches are compositionally biased toward gly residues: residues 260-277 (VGGG…GGPT) and 300-315 (GGPG…GGSS). Residues 316 to 330 (GSSSGSGPSAPTSSS) show a composition bias toward low complexity. The C2H2-type zinc finger occupies 514–542 (HICNWVSANGPCDKRFATSEELLSHLRTH). Arg-636 is subject to Omega-N-methylarginine.

Belongs to the Elbow/Noc family.

It localises to the nucleus. Functionally, may function as a transcriptional repressor. The sequence is that of Zinc finger protein 503 (ZNF503) from Homo sapiens (Human).